Consider the following 669-residue polypeptide: UvrABC system protein B (669 aa).

Positions 26 to 183 (TNFHAGIAKQ…RHLTELQYTR (158 aa)) constitute a Helicase ATP-binding domain. 39–46 (GVTGSGKT) lines the ATP pocket. The Beta-hairpin signature appears at 92 to 115 (YYDYYQPEAYVPASDTFIEKDSSI). The Helicase C-terminal domain maps to 431–597 (QVDDLISQIN…SVVRPISDIL (167 aa)). A UVR domain is found at 631–666 (AAQMKVLEQKMYQHARDLEFEDAARIRDQIQRLREA).

The protein belongs to the UvrB family. Forms a heterotetramer with UvrA during the search for lesions. Interacts with UvrC in an incision complex.

Its subcellular location is the cytoplasm. The UvrABC repair system catalyzes the recognition and processing of DNA lesions. A damage recognition complex composed of 2 UvrA and 2 UvrB subunits scans DNA for abnormalities. Upon binding of the UvrA(2)B(2) complex to a putative damaged site, the DNA wraps around one UvrB monomer. DNA wrap is dependent on ATP binding by UvrB and probably causes local melting of the DNA helix, facilitating insertion of UvrB beta-hairpin between the DNA strands. Then UvrB probes one DNA strand for the presence of a lesion. If a lesion is found the UvrA subunits dissociate and the UvrB-DNA preincision complex is formed. This complex is subsequently bound by UvrC and the second UvrB is released. If no lesion is found, the DNA wraps around the other UvrB subunit that will check the other stand for damage. The sequence is that of UvrABC system protein B from Xylella fastidiosa (strain M23).